A 559-amino-acid chain; its full sequence is Protein QNR-71 (559 aa).

The N-terminal stretch at 1 to 22 is a signal peptide; sequence MSQAHRHLALLLPAEAVLCAAA. Topologically, residues 23 to 487 are extracellular; it reads MRFQDVLSNG…NGGSSSGTTK (465 aa). 10 N-linked (GlcNAc...) asparagine glycosylation sites follow: Asn92, Asn133, Asn145, Asn149, Asn192, Asn199, Asn248, Asn274, Asn307, and Asn311. The PKD domain occupies 239 to 326; that stretch reads VSMSQKHDRN…IIPVPCKPVT (88 aa). The interval 329 to 356 is disordered; it reads PSLPTPAVTTDASSNSDPSAPNEMAEDN. The span at 335–347 shows a compositional bias: polar residues; the sequence is AVTTDASSNSDPS. Asn459 carries an N-linked (GlcNAc...) asparagine glycan. Residues 488-508 traverse the membrane as a helical segment; it reads GVFIFLGLLAVFGAIGAFVLY. The Cytoplasmic segment spans residues 509 to 559; it reads KRYKQYKPIERSAGQAENQEGLSAYVSNFKAFFFPKSTERNPLLKSKPGIV.

Belongs to the PMEL/NMB family. As to expression, melanocyte-specific, restricted to the pigmented layer of the retina and the epidermis.

Its subcellular location is the membrane. Functionally, could be involved in melanogenesis. The chain is Protein QNR-71 (QNR-71) from Coturnix japonica (Japanese quail).